Reading from the N-terminus, the 402-residue chain is S-adenosylmethionine synthase (402 aa).

137–142 contacts ATP; it reads GQGSAD.

The protein belongs to the AdoMet synthase 2 family. Mg(2+) serves as cofactor.

It catalyses the reaction L-methionine + ATP + H2O = S-adenosyl-L-methionine + phosphate + diphosphate. Its pathway is amino-acid biosynthesis; S-adenosyl-L-methionine biosynthesis; S-adenosyl-L-methionine from L-methionine: step 1/1. Catalyzes the formation of S-adenosylmethionine from methionine and ATP. The polypeptide is S-adenosylmethionine synthase (Pyrobaculum islandicum (strain DSM 4184 / JCM 9189 / GEO3)).